The primary structure comprises 310 residues: HPr kinase/phosphorylase (310 aa).

Active-site residues include histidine 136 and lysine 157. Residue 151–158 (GDSGIGKS) coordinates ATP. Mg(2+) is bound at residue serine 158. Catalysis depends on aspartate 175, which acts as the Proton acceptor; for phosphorylation activity. Proton donor; for dephosphorylation activity. The interval 199–208 (LEIRGLGIIN) is important for the catalytic mechanism of both phosphorylation and dephosphorylation. Glutamate 200 is a Mg(2+) binding site. Residue arginine 241 is part of the active site. The interval 262–267 (PVRPGR) is important for the catalytic mechanism of dephosphorylation.

It belongs to the HPrK/P family. Homohexamer. Mg(2+) serves as cofactor.

The enzyme catalyses [HPr protein]-L-serine + ATP = [HPr protein]-O-phospho-L-serine + ADP + H(+). It carries out the reaction [HPr protein]-O-phospho-L-serine + phosphate + H(+) = [HPr protein]-L-serine + diphosphate. Functionally, catalyzes the ATP- as well as the pyrophosphate-dependent phosphorylation of a specific serine residue in HPr, a phosphocarrier protein of the phosphoenolpyruvate-dependent sugar phosphotransferase system (PTS). HprK/P also catalyzes the pyrophosphate-producing, inorganic phosphate-dependent dephosphorylation (phosphorolysis) of seryl-phosphorylated HPr (P-Ser-HPr). The two antagonistic activities of HprK/P are regulated by several intracellular metabolites, which change their concentration in response to the absence or presence of rapidly metabolisable carbon sources (glucose, fructose, etc.) in the growth medium. Therefore, by controlling the phosphorylation state of HPr, HPrK/P is a sensor enzyme that plays a major role in the regulation of carbon metabolism and sugar transport: it mediates carbon catabolite repression (CCR), and regulates PTS-catalyzed carbohydrate uptake and inducer exclusion. The polypeptide is HPr kinase/phosphorylase (Staphylococcus aureus (strain Mu3 / ATCC 700698)).